A 326-amino-acid polypeptide reads, in one-letter code: uncharacterized protein (326 aa).

This is an uncharacterized protein from Escherichia coli (strain K12).